A 162-amino-acid chain; its full sequence is Regulator of sigma D (162 aa).

The protein belongs to the Rsd/AlgQ family. In terms of assembly, interacts with RpoD.

Its subcellular location is the cytoplasm. Binds RpoD and negatively regulates RpoD-mediated transcription activation by preventing the interaction between the primary sigma factor RpoD with the catalytic core of the RNA polymerase and with promoter DNA. May be involved in replacement of the RNA polymerase sigma subunit from RpoD to RpoS during the transition from exponential growth to the stationary phase. The polypeptide is Regulator of sigma D (Salmonella arizonae (strain ATCC BAA-731 / CDC346-86 / RSK2980)).